We begin with the raw amino-acid sequence, 64 residues long: Large ribosomal subunit protein bL35 (64 aa).

Over residues 1 to 15 (MPKNKTHSGTAKRFR) the composition is skewed to basic residues. The disordered stretch occupies residues 1-27 (MPKNKTHSGTAKRFRVTGSGKLRREQA).

It belongs to the bacterial ribosomal protein bL35 family.

In Saccharopolyspora erythraea (strain ATCC 11635 / DSM 40517 / JCM 4748 / NBRC 13426 / NCIMB 8594 / NRRL 2338), this protein is Large ribosomal subunit protein bL35.